The chain runs to 389 residues: Ethanolamine-phosphate cytidylyltransferase (389 aa).

The tract at residues 1-20 (MIRNGRGAAGGAEQPGPGGR) is disordered. CTP-binding positions include 221-222 (AF), 229-232 (HVDF), lysine 259, 307-310 (HGKT), and 336-340 (SGSNL). Position 338 is a phosphoserine (serine 338). Phosphothreonine is present on residues threonine 341 and threonine 342.

This sequence belongs to the cytidylyltransferase family. As to expression, strongest expression in liver, heart, and skeletal muscle.

The catalysed reaction is phosphoethanolamine + CTP + H(+) = CDP-ethanolamine + diphosphate. It participates in phospholipid metabolism; phosphatidylethanolamine biosynthesis; phosphatidylethanolamine from ethanolamine: step 2/3. Ethanolamine-phosphate cytidylyltransferase that catalyzes the second step in the synthesis of phosphatidylethanolamine (PE) from ethanolamine via the CDP-ethanolamine pathway. Phosphatidylethanolamine is a dominant inner-leaflet phospholipid in cell membranes, where it plays a role in membrane function by structurally stabilizing membrane-anchored proteins, and participates in important cellular processes such as cell division, cell fusion, blood coagulation, and apoptosis. This is Ethanolamine-phosphate cytidylyltransferase (PCYT2) from Homo sapiens (Human).